A 334-amino-acid chain; its full sequence is Protein U17/U16 (334 aa).

This sequence belongs to the herpesviridae US22 family.

Functionally, isoform 3 can transactivate the human immunodeficiency virus type 1 promoter. This Human herpesvirus 6A (strain Uganda-1102) (HHV-6 variant A) protein is Protein U17/U16 (U17/U16).